The chain runs to 282 residues: Protoheme IX farnesyltransferase (282 aa).

The next 9 membrane-spanning stretches (helical) occupy residues Leu-9–Ala-29, Leu-39–Phe-59, Leu-79–Leu-99, Leu-102–Val-122, Val-139–Ile-159, Leu-165–Leu-185, Ile-210–Ser-230, Ala-231–Ile-251, and Val-261–Met-281.

This sequence belongs to the UbiA prenyltransferase family. Protoheme IX farnesyltransferase subfamily.

The protein resides in the cell inner membrane. It carries out the reaction heme b + (2E,6E)-farnesyl diphosphate + H2O = Fe(II)-heme o + diphosphate. It participates in porphyrin-containing compound metabolism; heme O biosynthesis; heme O from protoheme: step 1/1. In terms of biological role, converts heme B (protoheme IX) to heme O by substitution of the vinyl group on carbon 2 of heme B porphyrin ring with a hydroxyethyl farnesyl side group. In Francisella tularensis subsp. holarctica (strain FTNF002-00 / FTA), this protein is Protoheme IX farnesyltransferase.